We begin with the raw amino-acid sequence, 475 residues long: Eukaryotic translation initiation factor 3 subunit L (475 aa).

One can recognise a PCI domain in the interval Asp-257–Leu-451.

The protein belongs to the eIF-3 subunit L family. In terms of assembly, component of the eukaryotic translation initiation factor 3 (eIF-3) complex.

It localises to the cytoplasm. Component of the eukaryotic translation initiation factor 3 (eIF-3) complex, which is involved in protein synthesis of a specialized repertoire of mRNAs and, together with other initiation factors, stimulates binding of mRNA and methionyl-tRNAi to the 40S ribosome. The eIF-3 complex specifically targets and initiates translation of a subset of mRNAs involved in cell proliferation. The protein is Eukaryotic translation initiation factor 3 subunit L of Botryotinia fuckeliana (strain B05.10) (Noble rot fungus).